A 327-amino-acid chain; its full sequence is Ribose-phosphate pyrophosphokinase (327 aa).

ATP contacts are provided by residues 46-48 (NGE) and 105-106 (RQ). Mg(2+) is bound by residues H139 and D179. Residue K203 is part of the active site. Residues R205, D231, and 235-239 (DTGGT) contribute to the D-ribose 5-phosphate site.

The protein belongs to the ribose-phosphate pyrophosphokinase family. Class I subfamily. As to quaternary structure, homohexamer. The cofactor is Mg(2+).

It is found in the cytoplasm. It carries out the reaction D-ribose 5-phosphate + ATP = 5-phospho-alpha-D-ribose 1-diphosphate + AMP + H(+). It functions in the pathway metabolic intermediate biosynthesis; 5-phospho-alpha-D-ribose 1-diphosphate biosynthesis; 5-phospho-alpha-D-ribose 1-diphosphate from D-ribose 5-phosphate (route I): step 1/1. Functionally, involved in the biosynthesis of the central metabolite phospho-alpha-D-ribosyl-1-pyrophosphate (PRPP) via the transfer of pyrophosphoryl group from ATP to 1-hydroxyl of ribose-5-phosphate (Rib-5-P). The protein is Ribose-phosphate pyrophosphokinase of Mycobacterium leprae (strain TN).